The sequence spans 376 residues: Serpin B6 (376 aa).

Methionine 1 is subject to N-acetylmethionine. A Phosphoserine modification is found at serine 151. At lysine 195 the chain carries N6-acetyllysine.

It belongs to the serpin family. Ov-serpin subfamily. As to quaternary structure, forms a complex with the monomeric form of beta-tryptase.

The protein localises to the cytoplasm. Inhibitor of cathepsin G, kallikrein-8 and thrombin. May play an important role in the inner ear in the protection against leakage of lysosomal content during stress. May be involved in the regulation of serine proteinases present in the brain or extravasated from the blood. In Macaca fascicularis (Crab-eating macaque), this protein is Serpin B6 (SERPINB6).